Reading from the N-terminus, the 76-residue chain is Putative protein StbC (76 aa).

The polypeptide is Putative protein StbC (stbC) (Escherichia coli).